Reading from the N-terminus, the 221-residue chain is Ras-related protein Rab-28 (221 aa).

Residue serine 2 is modified to N-acetylserine. Position 8 is a phosphoserine (serine 8). Positions 21, 24, 25, 26, 27, 38, 39, 41, and 44 each coordinate GTP. Threonine 26 lines the Mg(2+) pocket. Residues 35 to 49 (ETFGKQYKQTIGLDF) form a switch I region. The Mg(2+) site is built by threonine 44 and aspartate 68. The tract at residues 68 to 85 (DIGGQTIGGKMLDKYIYG) is switch II. GTP-binding residues include glycine 71, asparagine 129, lysine 130, aspartate 132, alanine 160, and lysine 161. Cysteine methyl ester is present on cysteine 218. Residue cysteine 218 is the site of S-farnesyl cysteine attachment. Residues 219–221 (AVQ) constitute a propeptide, removed in mature form.

The protein belongs to the small GTPase superfamily. Rab family. As to quaternary structure, interacts (prenylated form) with PDE6D; the interaction promotes RAB28 delivery to the photoreceptor outer segments. Interacts with KCNJ13; the interaction may facilitate cone outer segments phagocytosis. Interacts with RELA; the interaction contributes to RELA transport from cytoplasm to nucleus. The cofactor is Mg(2+). Post-translationally, isoprenylated. Testis, brain, and to much lower levels heart, skeletal muscle and fat cells. Expressed in the retina.

Its subcellular location is the cell membrane. The protein resides in the cytoplasm. It localises to the cytoskeleton. The protein localises to the cilium basal body. It is found in the nucleus. It catalyses the reaction GTP + H2O = GDP + phosphate + H(+). Regulated by guanine nucleotide exchange factors (GEFs) which promote the exchange of bound GDP for free GTP. Regulated by GTPase activating proteins (GAPs) which increase the GTP hydrolysis activity. Inhibited by GDP dissociation inhibitors (GDIs). The small GTPases Rab are key regulators of intracellular membrane trafficking, from the formation of transport vesicles to their fusion with membranes. Rabs cycle between an inactive GDP-bound form and an active GTP-bound form that is able to recruit to membranes different sets of downstream effectors directly responsible for vesicle formation, movement, tethering and fusion. RAB28 is required for shedding and phagocytosis of cone cell outer segments (OS) discs in the retina. Also participates in nuclear factor kappa-B p65/RELA nuclear transport in endothelial cells. This Rattus norvegicus (Rat) protein is Ras-related protein Rab-28.